The primary structure comprises 301 residues: Tyrosine recombinase XerD (301 aa).

The Core-binding (CB) domain maps to 6–89 (PLHQQLIEQF…ALKVFFHFLK (84 aa)). The 186-residue stretch at 108–293 (RLPSILSTEE…ASESIIEKFH (186 aa)) folds into the Tyr recombinase domain. Residues Arg152, Lys174, His245, Arg248, and His271 contribute to the active site. Tyr280 functions as the O-(3'-phospho-DNA)-tyrosine intermediate in the catalytic mechanism.

The protein belongs to the 'phage' integrase family. XerD subfamily. Forms a cyclic heterotetrameric complex composed of two molecules of XerC and two molecules of XerD.

The protein resides in the cytoplasm. Its function is as follows. Site-specific tyrosine recombinase, which acts by catalyzing the cutting and rejoining of the recombining DNA molecules. The XerC-XerD complex is essential to convert dimers of the bacterial chromosome into monomers to permit their segregation at cell division. It also contributes to the segregational stability of plasmids. The protein is Tyrosine recombinase XerD of Chlamydia muridarum (strain MoPn / Nigg).